Reading from the N-terminus, the 133-residue chain is Ribonuclease VapC29 (133 aa).

The PINc domain occupies 3 to 122 (VLLDANVLIA…TLDSGLAHLH (120 aa)). Mg(2+)-binding residues include D6 and D97.

Belongs to the PINc/VapC protein family. Mg(2+) serves as cofactor.

Toxic component of a type II toxin-antitoxin (TA) system. Its cognate antitoxin is VapB29. Has ribonuclease activity. In Mycobacterium tuberculosis (strain CDC 1551 / Oshkosh), this protein is Ribonuclease VapC29.